The primary structure comprises 1203 residues: DNA-directed RNA polymerase subunit beta (1203 aa).

The span at alanine 1174 to alanine 1195 shows a compositional bias: basic and acidic residues. The segment at alanine 1174–glutamate 1203 is disordered.

Belongs to the RNA polymerase beta chain family. As to quaternary structure, the RNAP catalytic core consists of 2 alpha, 1 beta, 1 beta' and 1 omega subunit. When a sigma factor is associated with the core the holoenzyme is formed, which can initiate transcription.

It catalyses the reaction RNA(n) + a ribonucleoside 5'-triphosphate = RNA(n+1) + diphosphate. In terms of biological role, DNA-dependent RNA polymerase catalyzes the transcription of DNA into RNA using the four ribonucleoside triphosphates as substrates. The protein is DNA-directed RNA polymerase subunit beta of Streptococcus pneumoniae (strain JJA).